Reading from the N-terminus, the 224-residue chain is Cerebellin-2 (224 aa).

The first 51 residues, 1–51 (MPAPGQGPRGPLLSMPGRRGALREPADFGSSLGAVLALLLLLLPACCPVRA), serve as a signal peptide directing secretion. N-linked (GlcNAc...) asparagine glycosylation is found at Asn53 and Asn110. Residues 88 to 224 (SGSAKVAFSA…TFSGFLVFPL (137 aa)) form the C1q domain.

In terms of assembly, homohexamer; disulfide-linked homotrimers. The trimers are assembled via the globular C1q domains. The trimers associate via N-terminal cysteine residues to form disulfide-linked hexamers. May form homooligomers or heterooligomers with CBLN1 and CBLN3 prior to secretion. Once secreted, does not interact with other CBLN family members. Interacts with GRID2, and more weakly with GRID1. Interacts with NRXN1 and NRXN2 long and short isoforms produced by alternative promoter usage. Weakly interacts with NRXN3 short isoform and not at all with NRXN3 long isoform. As to expression, expressed in various brain regions with higher levels in the olfactory bulb, cerebral cortex, certain thalamic and hypothalamic nuclei, superior and inferior colliculi and some brainstem nuclei. Highly expressed in the dorsal medial habenula.

It localises to the secreted. In terms of biological role, acts as a synaptic organizer in specific subsets of neurons in the brain. Essential for long-term maintenance but not establishment of excitatory synapses. Functions as part of a trans-synaptic complex by binding to postsynaptic GRID1 and presynaptic neurexins. This interaction helps regulate the activity of NMDA and AMPA receptors at hippocampal synapses without affecting synapse formation. NRXN1B-CBLN2-GRID1 complex transduce presynaptic signals into postsynaptic NMDAR response. NRXN3B-CBLN2-GRID1 complex transduce presynaptic signals into postsynaptic AMPAR response. The protein is Cerebellin-2 (Cbln2) of Mus musculus (Mouse).